The chain runs to 356 residues: Arginine kinase Lit v 2.0101 (356 aa).

Residues 9–91 (KLEAGFKKLE…FDPIIEDYHV (83 aa)) form the Phosphagen kinase N-terminal domain. 64 to 68 (GVGIY) is an L-arginine binding site. Positions 119 to 356 (FVISTRVRCG…LELIKIEKEM (238 aa)) constitute a Phosphagen kinase C-terminal domain. Residues 122-126 (STRVR) and histidine 185 each bind ATP. Residue glutamate 225 participates in L-arginine binding. Residue arginine 229 participates in ATP binding. Cysteine 271 is a binding site for L-arginine. Residues 280–284 (RASVH) and 309–314 (RGTRGE) contribute to the ATP site. Glutamate 314 contributes to the L-arginine binding site.

Belongs to the ATP:guanido phosphotransferase family. Monomer. As to expression, muscle (at protein level).

It catalyses the reaction L-arginine + ATP = N(omega)-phospho-L-arginine + ADP + H(+). The catalysed reaction is dTDP + ATP = dTTP + ADP. Its function is as follows. Catalyzes the reversible transfer of high energy ATP gamma-phosphate group to L-arginine. Has nucleoside diphosphate kinase-like activity toward dTDP. Binds and phosphorylates dTDP using ATP as a phosphate donor. Does not phosphorylate dADP, dCDP, dGDP, dTMP or thymidine. The polypeptide is Arginine kinase Lit v 2.0101 (Penaeus vannamei (Whiteleg shrimp)).